The sequence spans 833 residues: MTASPDPAQRIDALRRRIEDANYRYHVLDEPQMADADYDKLMRELEALERAHPELASADSPTQRVGHLAASRFAEVRHAMPMLSLGNAFSDEEVTEFVRRISERLEVRQPLFSAEPKLDGLAISLRYENGEFVQGATRGDGATGEDVSANLRTVKAIPLRLRGEGWPRVLEVRGEVYMPRAAFEAYNAQMRAQGGKILANPRNGAAGSLRQLDARITAQRPLSFFAYGVGEVSEGALPQAHSAILAQLRAWGFPVSALVEVVQGSDGLLAYYQRIGEARDGLAFDIDGVVYKLDDLAGQREMGFVSRAPRWAIAHKFPAQEQSTTVEAIEIQIGRTGAATPVARLKPVHVAGVIVTNATLHNADQIARLDVRVGDTVIVRRAGDVIPEVAAVVADQRPPGTQAWQMPTQCPVCGSEIVREEGQAVWRCSGELTCPAQRKEAFRHFVSRRAMDVDGLGEKFIEVLVDSGLVKGVADLYLLSVDQLLQLRLISTADSPHAFLREAREHLASGAYAQLEASVVGIGVDLAGERDVPQTWQADLLRAGLPSFDWNRKKIATKWAENLIEAIEISRDTTLERFLFALGIEHVGESTAKALSAWFGDLELIRHLPWPLFKRVPDIGGEVARSLGHFFDQAGNQKAIDHLLARKVRIGDTHPPSPKLRGELSLANLLEDLEIPKVTPIRAAQIATAFGSIDALRNGGPEPLVEAGVPQSVAESLAAWLLVPANDTLAVNAQRKLSELLAMLPEAGEEKTGPLDGQTVVITGTLAALTRDAAKQRLEALGAKVAGSVSKKTAFLVAGEEAGSKLDKAQSLGVEIWDEARLLAFLGDHGQQP.

Residues 35–39, 84–85, and glutamate 115 each bind NAD(+); these read DADYD and SL. Catalysis depends on lysine 117, which acts as the N6-AMP-lysine intermediate. Positions 138, 175, 292, and 316 each coordinate NAD(+). Positions 410, 413, 428, and 434 each coordinate Zn(2+). The 84-residue stretch at 750-833 folds into the BRCT domain; sequence EKTGPLDGQT…AFLGDHGQQP (84 aa).

This sequence belongs to the NAD-dependent DNA ligase family. LigA subfamily. Requires Mg(2+) as cofactor. It depends on Mn(2+) as a cofactor.

The catalysed reaction is NAD(+) + (deoxyribonucleotide)n-3'-hydroxyl + 5'-phospho-(deoxyribonucleotide)m = (deoxyribonucleotide)n+m + AMP + beta-nicotinamide D-nucleotide.. Its function is as follows. DNA ligase that catalyzes the formation of phosphodiester linkages between 5'-phosphoryl and 3'-hydroxyl groups in double-stranded DNA using NAD as a coenzyme and as the energy source for the reaction. It is essential for DNA replication and repair of damaged DNA. This is DNA ligase from Xanthomonas axonopodis pv. citri (strain 306).